Here is a 1700-residue protein sequence, read N- to C-terminus: Probable serine/threonine-protein kinase ifkC (1700 aa).

Residues 1 to 25 (MPPKPKQKAKQPSQQPPPPPPPAAA) are disordered. The segment covering 14 to 23 (QQPPPPPPPA) has biased composition (pro residues). The RWD domain occupies 74 to 197 (MELEALQAIF…EIAKDFLNEN (124 aa)). Over residues 454–463 (GLKKSPSTFE) the composition is skewed to polar residues. The interval 454–488 (GLKKSPSTFEYSGEGGGGGVGGGSSQKTINPHQQS) is disordered. The span at 466-477 (GEGGGGGVGGGS) shows a compositional bias: gly residues. Residues 479–488 (QKTINPHQQS) are compositionally biased toward polar residues. A Protein kinase domain is found at 494-1027 (FEEIQLLGRG…AQQLLQSELM (534 aa)). ATP is bound by residues 500–508 (LGRGGFGQV) and Lys523. Disordered stretches follow at residues 568 to 639 (LTND…ENND) and 689 to 760 (GNNT…SSSK). Over residues 572-639 (NSDDDDDDDD…SEFESEENND (68 aa)) the composition is skewed to acidic residues. The segment covering 697 to 735 (SSNQHLQQQQQQNQSQQQKKQPQQNQSQQQKKLKNSNSK) has biased composition (low complexity). The span at 736–752 (SKSKSKSKSKSKSKSNS) shows a compositional bias: basic residues. Catalysis depends on Asp822, which acts as the Proton acceptor. 4 stretches are compositionally biased toward low complexity: residues 850–875 (TSTLSPTTNINSSTSSAGSLTTSSNS), 1135–1158 (NNSSSSSSTTTTTSTTNTANNTNS), 1230–1240 (SSNGNSNNNNS), and 1509–1531 (NNSNNSSSSSSSSSSNNNNSYNN). Disordered stretches follow at residues 850 to 901 (TSTL…EVEG), 1134 to 1160 (FNNSSSSSSTTTTTSTTNTANNTNSVV), 1216 to 1253 (KHHHQQQNDVRHDNSSNGNSNNNNSNDRHHDQDKSNTT), and 1507 to 1531 (NLNNSNNSSSSSSSSSSNNNNSYNN).

Belongs to the protein kinase superfamily. Ser/Thr protein kinase family. GCN2 subfamily.

The enzyme catalyses L-seryl-[protein] + ATP = O-phospho-L-seryl-[protein] + ADP + H(+). It catalyses the reaction L-threonyl-[protein] + ATP = O-phospho-L-threonyl-[protein] + ADP + H(+). The sequence is that of Probable serine/threonine-protein kinase ifkC (ifkC) from Dictyostelium discoideum (Social amoeba).